Reading from the N-terminus, the 1375-residue chain is Capping protein, Arp2/3 and myosin-I linker protein 3 (1375 aa).

The disordered stretch occupies residues 124–151 (IRRGNADTPEGPRDTSPNSETSTSTTHS). Positions 138 to 151 (TSPNSETSTSTTHS) are enriched in low complexity. LRR repeat units follow at residues 244 to 264 (SLEE…QKLA), 274 to 295 (VLHA…SLSQ), 303 to 323 (GLTK…QALG), 335 to 357 (SLRY…NALY), 365 to 386 (ALVH…GALL), 392 to 413 (HLTY…EAPP), 424 to 444 (TLSH…RALL), 455 to 475 (DLHL…ALQE), 482 to 501 (CIGS…LTLV), and 509 to 530 (SLKH…EEIL). Disordered stretches follow at residues 864–901 (RTLS…GTNI) and 969–1375 (KLRH…PGTD). The segment covering 981-997 (PRTTPPGPGRPSVPVPG) has biased composition (pro residues). Positions 1007–1022 (RLDEGLEDFFSRRVMD) are enriched in basic and acidic residues. Residues 1047–1062 (QKKRRRGLFHFRRPRS) are compositionally biased toward basic residues. Pro residues predominate over residues 1078–1097 (LPPPPPPPPTQESPPSPDPP). A compositionally biased stretch (low complexity) spans 1098-1108 (SLGNNSSPCWS). A compositionally biased stretch (basic and acidic residues) spans 1219–1229 (RRAEATWHIAE). The span at 1233-1244 (ANHSCQSPSPAS) shows a compositional bias: polar residues. Positions 1272-1281 (PIGPRPPKPV) are enriched in pro residues. Basic and acidic residues predominate over residues 1348–1360 (QSCDKLEPDRRQP).

The protein belongs to the CARMIL family.

Its subcellular location is the cytoplasm. It localises to the cell membrane. This Mus musculus (Mouse) protein is Capping protein, Arp2/3 and myosin-I linker protein 3 (Carmil3).